A 221-amino-acid chain; its full sequence is Probable septum site-determining protein MinC (221 aa).

Belongs to the MinC family. As to quaternary structure, interacts with MinD and FtsZ.

Cell division inhibitor that blocks the formation of polar Z ring septums. Rapidly oscillates between the poles of the cell to destabilize FtsZ filaments that have formed before they mature into polar Z rings. Prevents FtsZ polymerization. This Aliivibrio salmonicida (strain LFI1238) (Vibrio salmonicida (strain LFI1238)) protein is Probable septum site-determining protein MinC.